A 287-amino-acid polypeptide reads, in one-letter code: MAIRTFRPYTPGTRTRVVTDFSEVTGRKPERSLVVSKHRRKGRNNRGVITCRHRGGGHKRQYRLVDFRRNKHGVTAKVAAIHYDPHRNARLALLFYADGEKRYILAPAGISIGQTVVSGTEVPIEIGNAMPLSAIPLGSSVHCVELYAGRGGQMVRTAGASAQVMAKEGDYVALKLPSTEVRLVRRECFATLGEVGNAEIRNTSLGKAGRRRWLGRRPQVRGSVMNPCDHPHGGGEGRAPIGRSGPVTPWGKPALGLKTRKRNKPSNKFVLRKRRKTSKRSRGGRDS.

Residues 221 to 287 (RGSVMNPCDH…SKRSRGGRDS (67 aa)) are disordered. Residues 258–287 (KTRKRNKPSNKFVLRKRRKTSKRSRGGRDS) show a composition bias toward basic residues.

This sequence belongs to the universal ribosomal protein uL2 family. Part of the 50S ribosomal subunit. Forms a bridge to the 30S subunit in the 70S ribosome.

Functionally, one of the primary rRNA binding proteins. Required for association of the 30S and 50S subunits to form the 70S ribosome, for tRNA binding and peptide bond formation. It has been suggested to have peptidyltransferase activity; this is somewhat controversial. Makes several contacts with the 16S rRNA in the 70S ribosome. The chain is Large ribosomal subunit protein uL2 from Synechococcus sp. (strain CC9311).